A 492-amino-acid chain; its full sequence is Cytoplasmic dynein 1 light intermediate chain 2 (492 aa).

ATP is bound at residue 61–68; that stretch reads GEDGSGKT. Disordered regions lie at residues 187 to 206, 371 to 423, and 437 to 492; these read PEEGCQGSPQRRGPLTSGSD, AKQP…KNNA, and LSKK…ENEA. At Ser-194 the chain carries Phosphoserine. Residues 371-381 show a composition bias toward polar residues; that stretch reads AKQPATPTRAS. Phosphoserine is present on residues Ser-383 and Ser-391. Omega-N-methylarginine is present on Arg-397. The segment covering 400 to 412 has biased composition (low complexity); the sequence is PASVPSSSPGTSV. Thr-441 carries the phosphothreonine modification. A phosphoserine mark is found at Ser-443 and Ser-446. Residues 452-469 are compositionally biased toward polar residues; that stretch reads VQSTAKKSGQKTVLSNVQ. Positions 471-480 are enriched in basic and acidic residues; the sequence is ELDRMTRKPD. Over residues 482–492 the composition is skewed to polar residues; the sequence is MVTNSSTENEA.

The protein belongs to the dynein light intermediate chain family. As to quaternary structure, homodimer. The cytoplasmic dynein 1 complex consists of two catalytic heavy chains (HCs) and a number of non-catalytic subunits presented by intermediate chains (ICs), light intermediate chains (LICs) and light chains (LCs); the composition seems to vary in respect to the IC, LIC and LC composition. The heavy chain homodimer serves as a scaffold for the probable homodimeric assembly of the respective non-catalytic subunits. The ICs and LICs bind directly to the HC dimer and the LCs assemble on the IC dimer. Interacts with DYNC1H1; DYNC1LI1 and DYNC1LI2 bind mutually exclusive to DYNC1H.

It localises to the cytoplasm. Its subcellular location is the cytoskeleton. In terms of biological role, acts as one of several non-catalytic accessory components of the cytoplasmic dynein 1 complex that are thought to be involved in linking dynein to cargos and to adapter proteins that regulate dynein function. Cytoplasmic dynein 1 acts as a motor for the intracellular retrograde motility of vesicles and organelles along microtubules. May play a role in binding dynein to membranous organelles or chromosomes. In Homo sapiens (Human), this protein is Cytoplasmic dynein 1 light intermediate chain 2.